The sequence spans 289 residues: Protease HtpX homolog (289 aa).

Transmembrane regions (helical) follow at residues 8 to 28 and 29 to 49; these read LALL…VIGG and SSGL…SWYQ. Residue His132 participates in Zn(2+) binding. Glu133 is a catalytic residue. Zn(2+) is bound at residue His136. The next 2 membrane-spanning stretches (helical) occupy residues 151-171 and 183-203; these read VAGA…FGGI and LGVL…QLAI. Residue Glu208 coordinates Zn(2+).

Belongs to the peptidase M48B family. The cofactor is Zn(2+).

Its subcellular location is the cell inner membrane. The sequence is that of Protease HtpX homolog from Nostoc sp. (strain PCC 7120 / SAG 25.82 / UTEX 2576).